A 452-amino-acid polypeptide reads, in one-letter code: Chaperone SurA (452 aa).

An N-terminal signal peptide occupies residues 1 to 28; sequence MKKTLRFAAVVSSLAAASALLAAAPAAA. 2 consecutive PpiC domains span residues 186 to 288 and 302 to 400; these read QQDL…RLVD and IVQT…QVLS.

The protein localises to the periplasm. It catalyses the reaction [protein]-peptidylproline (omega=180) = [protein]-peptidylproline (omega=0). In terms of biological role, chaperone involved in the correct folding and assembly of outer membrane proteins. Recognizes specific patterns of aromatic residues and the orientation of their side chains, which are found more frequently in integral outer membrane proteins. May act in both early periplasmic and late outer membrane-associated steps of protein maturation. In Burkholderia lata (strain ATCC 17760 / DSM 23089 / LMG 22485 / NCIMB 9086 / R18194 / 383), this protein is Chaperone SurA.